The following is a 304-amino-acid chain: GTPase Era (304 aa).

Positions 11 to 179 (YCGFIAIVGR…QKIVRKSLRE (169 aa)) constitute an Era-type G domain. The interval 19–26 (GRPNVGKS) is G1. 19–26 (GRPNVGKS) contacts GTP. Positions 45-49 (QTTRH) are G2. The interval 66–69 (DTPG) is G3. GTP contacts are provided by residues 66–70 (DTPGL) and 128–131 (NKVD). Positions 128–131 (NKVD) are G4. Residues 158 to 160 (ISA) are G5. The region spanning 210-287 (TGEELPYSVT…HLELWVKVKA (78 aa)) is the KH type-2 domain.

The protein belongs to the TRAFAC class TrmE-Era-EngA-EngB-Septin-like GTPase superfamily. Era GTPase family. In terms of assembly, monomer.

The protein resides in the cytoplasm. It is found in the cell inner membrane. Its function is as follows. An essential GTPase that binds both GDP and GTP, with rapid nucleotide exchange. Plays a role in 16S rRNA processing and 30S ribosomal subunit biogenesis and possibly also in cell cycle regulation and energy metabolism. This is GTPase Era from Actinobacillus pleuropneumoniae serotype 5b (strain L20).